Here is a 318-residue protein sequence, read N- to C-terminus: Protein OPG137 (318 aa).

Residues Val-145 to Ser-172 adopt a coiled-coil conformation.

It belongs to the orthopoxvirus OPG137 family. Homomultimer. Interacts with OPG160. Post-translationally, phosphorylated by a OPG054-independent mechanism.

It is found in the host cytoplasm. Its function is as follows. Required for viral crescent formation early during virus morphogenesis. The polypeptide is Protein OPG137 (OPG137) (Vaccinia virus (strain Western Reserve) (VACV)).